The primary structure comprises 336 residues: Dihydroorotate dehydrogenase (quinone) (336 aa).

Residues 62–66 and Thr86 each bind FMN; that span reads AGLDK. Residue Lys66 coordinates substrate. 111–115 contributes to the substrate binding site; it reads NRMGF. Residues Asn139 and Asn172 each coordinate FMN. Asn172 provides a ligand contact to substrate. Residue Ser175 is the Nucleophile of the active site. Asn177 is a binding site for substrate. The FMN site is built by Lys217 and Thr245. A substrate-binding site is contributed by 246–247; the sequence is NT. FMN-binding positions include Gly268, Gly297, and 318-319; that span reads YS.

Belongs to the dihydroorotate dehydrogenase family. Type 2 subfamily. As to quaternary structure, monomer. Requires FMN as cofactor.

The protein localises to the cell membrane. The enzyme catalyses (S)-dihydroorotate + a quinone = orotate + a quinol. The protein operates within pyrimidine metabolism; UMP biosynthesis via de novo pathway; orotate from (S)-dihydroorotate (quinone route): step 1/1. Catalyzes the conversion of dihydroorotate to orotate with quinone as electron acceptor. This is Dihydroorotate dehydrogenase (quinone) from Pectobacterium atrosepticum (strain SCRI 1043 / ATCC BAA-672) (Erwinia carotovora subsp. atroseptica).